The following is a 302-amino-acid chain: Ribosomal protein L11 methyltransferase (302 aa).

Residues Thr148, Gly169, Asp191, and Asn237 each contribute to the S-adenosyl-L-methionine site.

Belongs to the methyltransferase superfamily. PrmA family.

Its subcellular location is the cytoplasm. The enzyme catalyses L-lysyl-[protein] + 3 S-adenosyl-L-methionine = N(6),N(6),N(6)-trimethyl-L-lysyl-[protein] + 3 S-adenosyl-L-homocysteine + 3 H(+). In terms of biological role, methylates ribosomal protein L11. The sequence is that of Ribosomal protein L11 methyltransferase from Desulfosudis oleivorans (strain DSM 6200 / JCM 39069 / Hxd3) (Desulfococcus oleovorans).